Reading from the N-terminus, the 303-residue chain is MDDFSSISLLSLAMLVGCYVSGIIPLAVNFSEEKLKLVTVLGAGLLCGTALAVIIPEGVHALYEEILEAKHHDLGEIHKVKEAETGAETSVAHEHDHSNLHAYIGVSLVLGFVFMLLVDQIGSSHMHSADDPEAARAASSKITTTLGLVVHAAADGVALGAAASTSQTSVQLIVFVAIMLHKAPAAFGLVSFLMHAGLERNRIRKHLLVFALAAPVLSMLTYLGLSKSSKEALSEINATGVAMLFSAGTFLYVATVHVLPEVGGMGHSHKPDVGAAKGLSRLEVCALVLGCLIPLVLSIGHQH.

A helical membrane pass occupies residues Ile7–Ala27. The N-linked (GlcNAc...) asparagine glycan is linked to Asn29. 5 helical membrane-spanning segments follow: residues Leu35–Ile55, Ala102–Gly122, Ile142–Ala162, Leu172–Phe192, and His206–Ser226. The N-linked (GlcNAc...) asparagine glycan is linked to Asn237. The next 2 helical transmembrane spans lie at Gly240 to Pro260 and Leu282 to Gln302.

Belongs to the ZIP transporter (TC 2.A.5) family.

It localises to the golgi apparatus. Its subcellular location is the trans-Golgi network membrane. It is found in the cell membrane. The protein localises to the cytoplasm. The protein resides in the perinuclear region. It localises to the mitochondrion. Its subcellular location is the nucleus. The catalysed reaction is Zn(2+)(in) = Zn(2+)(out). Its function is as follows. Transports zinc ions across cell and organelle membranes into the cytoplasm and regulates intracellular zinc homeostasis. Participates in the zinc ions efflux out of the secretory compartments. Regulates intracellular zinc level, resulting in the enhancement of AKT1 and MAPK3/MAPK1 (Erk1/2) phosphorylation in response to the BCR activation. Also functions as a membrane androgen receptor that mediates, through a G protein, the non-classical androgen signaling pathway, characterized by the activation of MAPK3/MAPK1 (Erk1/2) and transcription factors CREB1 or ATF1. Moreover, has dual functions as a membrane-bound androgen receptor and as an androgen-dependent zinc transporter both of which are mediated through an inhibitory G protein (Gi) that mediates both MAP kinase and zinc signaling leading to the androgen-dependent apoptotic process. The polypeptide is Zinc transporter ZIP9-A (slc39a9-a) (Xenopus laevis (African clawed frog)).